Here is a 634-residue protein sequence, read N- to C-terminus: Chaperone protein dnaK2 (634 aa).

Thr-197 carries the post-translational modification Phosphothreonine; by autocatalysis. Residues 601-623 are compositionally biased toward low complexity; it reads GAAAAESGADAGAAGAGDSSSGD. Positions 601-634 are disordered; the sequence is GAAAAESGADAGAAGAGDSSSGDDVIDAEFTESK. A compositionally biased stretch (acidic residues) spans 624–634; it reads DVIDAEFTESK.

The protein belongs to the heat shock protein 70 family.

Acts as a chaperone. The protein is Chaperone protein dnaK2 (dnaK2) of Prochlorococcus marinus (strain MIT 9313).